A 95-amino-acid polypeptide reads, in one-letter code: Large ribosomal subunit protein bL25 (95 aa).

This sequence belongs to the bacterial ribosomal protein bL25 family. Part of the 50S ribosomal subunit; part of the 5S rRNA/L5/L18/L25 subcomplex. Contacts the 5S rRNA. Binds to the 5S rRNA independently of L5 and L18.

In terms of biological role, this is one of the proteins that binds to the 5S RNA in the ribosome where it forms part of the central protuberance. The chain is Large ribosomal subunit protein bL25 from Tolumonas auensis (strain DSM 9187 / NBRC 110442 / TA 4).